The primary structure comprises 484 residues: MKYSANLTALLQTDTVLVAVFEDGSLSPSAQQFDGQGEVSALLKSGDISGKIGEIATFRRQNQRIIVVGAGKPNDINERQFKQITQKAFQAVKPTSAQTLANALTEVQINGRDLYWNIRFGLETIAAESYIFDEFKSKKADPVKLRNVIFHADDKQAQLAVQHGSAIALGVKLARDIANCPPNVCNPNYLAAQAKKLEKQTALLTTAVLGEKEMAELGMHAYLGVSQGSKNEAQLSVMTYKNHPDPHAKPIVLVGKGLTFDAGGISLKPSADMDEMKYDMCGAASIFGVMNALVELQLPLNVIGVMAGCENLPDGNAYRPGDILTTMNGLTVEVLNTDAEGRLVLCDTLTYVERFEPECVVDVATLTGACVVALGQHNSGLISTNDELAEQLFRASQQTQDKAWRLPLSDEYQEQLKSPFADLANIGGRWGGAITAGAFLSNFTKQYRWAHLDIAGTAWLQGANKGATGRPVSLLTQFLINQCQ.

Positions 256 and 261 each coordinate Mn(2+). Residue Lys-268 is part of the active site. Residues Asp-279, Asp-338, and Glu-340 each contribute to the Mn(2+) site. The active site involves Arg-342.

This sequence belongs to the peptidase M17 family. The cofactor is Mn(2+).

It is found in the cytoplasm. It catalyses the reaction Release of an N-terminal amino acid, Xaa-|-Yaa-, in which Xaa is preferably Leu, but may be other amino acids including Pro although not Arg or Lys, and Yaa may be Pro. Amino acid amides and methyl esters are also readily hydrolyzed, but rates on arylamides are exceedingly low.. The catalysed reaction is Release of an N-terminal amino acid, preferentially leucine, but not glutamic or aspartic acids.. Functionally, presumably involved in the processing and regular turnover of intracellular proteins. Catalyzes the removal of unsubstituted N-terminal amino acids from various peptides. This chain is Probable cytosol aminopeptidase, found in Actinobacillus succinogenes (strain ATCC 55618 / DSM 22257 / CCUG 43843 / 130Z).